A 379-amino-acid chain; its full sequence is Putative zinc metalloprotease BR1156/BS1330_I1152 (379 aa).

His33 serves as a coordination point for Zn(2+). Glu34 is a catalytic residue. Residue His37 participates in Zn(2+) binding. The next 4 membrane-spanning stretches (helical) occupy residues 39–61 (LVAR…ELLG), 122–144 (VFAG…FALY), 305–327 (FDWL…LFPL), and 355–377 (IFYR…NDLF). One can recognise a PDZ domain in the interval 133-208 (TIAIFSVFFA…LNFTVERDGK (76 aa)).

The protein belongs to the peptidase M50B family. Zn(2+) serves as cofactor.

It is found in the cell inner membrane. This chain is Putative zinc metalloprotease BR1156/BS1330_I1152, found in Brucella suis biovar 1 (strain 1330).